Reading from the N-terminus, the 313-residue chain is 2,3-dihydroxyphenylpropionate/2,3-dihydroxicinnamic acid 1,2-dioxygenase (313 aa).

His116 functions as the Proton donor in the catalytic mechanism. The active-site Proton acceptor is His180.

It belongs to the LigB/MhpB extradiol dioxygenase family. In terms of assembly, homotetramer. The cofactor is Fe(2+).

It carries out the reaction 3-(2,3-dihydroxyphenyl)propanoate + O2 = (2Z,4E)-2-hydroxy-6-oxonona-2,4-dienedioate + H(+). The catalysed reaction is (2E)-3-(2,3-dihydroxyphenyl)prop-2-enoate + O2 = (2Z,4E,7E)-2-hydroxy-6-oxonona-2,4,7-trienedioate + H(+). It participates in aromatic compound metabolism; 3-phenylpropanoate degradation. In terms of biological role, catalyzes the non-heme iron(II)-dependent oxidative cleavage of 2,3-dihydroxyphenylpropionic acid and 2,3-dihydroxicinnamic acid into 2-hydroxy-6-ketononadienedioate and 2-hydroxy-6-ketononatrienedioate, respectively. The polypeptide is 2,3-dihydroxyphenylpropionate/2,3-dihydroxicinnamic acid 1,2-dioxygenase (Mycobacterium sp. (strain MCS)).